Consider the following 306-residue polypeptide: Tryptophan 2,3-dioxygenase (306 aa).

The disordered stretch occupies residues 1–33 (MQPPGDDAAPRCPFAGAHAPDAPHVPEAAGDDA). Residues 75–79 (FIIQH), tyrosine 137, and arginine 141 each bind substrate. Histidine 264 contacts heme. Threonine 278 lines the substrate pocket.

The protein belongs to the tryptophan 2,3-dioxygenase family. Homotetramer. It depends on heme as a cofactor.

The catalysed reaction is L-tryptophan + O2 = N-formyl-L-kynurenine. It functions in the pathway amino-acid degradation; L-tryptophan degradation via kynurenine pathway; L-kynurenine from L-tryptophan: step 1/2. In terms of biological role, heme-dependent dioxygenase that catalyzes the oxidative cleavage of the L-tryptophan (L-Trp) pyrrole ring and converts L-tryptophan to N-formyl-L-kynurenine. Catalyzes the oxidative cleavage of the indole moiety. This chain is Tryptophan 2,3-dioxygenase, found in Burkholderia pseudomallei (strain 668).